Here is a 369-residue protein sequence, read N- to C-terminus: DNA replication and repair protein RecF (369 aa).

G30–T37 contacts ATP.

Belongs to the RecF family.

The protein localises to the cytoplasm. The RecF protein is involved in DNA metabolism; it is required for DNA replication and normal SOS inducibility. RecF binds preferentially to single-stranded, linear DNA. It also seems to bind ATP. This Streptococcus agalactiae serotype III (strain NEM316) protein is DNA replication and repair protein RecF.